Here is a 418-residue protein sequence, read N- to C-terminus: Synaptotagmin-15 (418 aa).

The Extracellular segment spans residues 1–4 (MAEQ). A helical; Signal-anchor for type III membrane protein membrane pass occupies residues 5–27 (LAFLIGGIIGGLLLLIGVSCCLW). Over 28-418 (RRFCATFTYE…WHALCRPTEP (391 aa)) the chain is Cytoplasmic. C2 domains follow at residues 144 to 261 (CLGR…HRII) and 275 to 396 (EFGD…EHWG).

This sequence belongs to the synaptotagmin family. Homodimer. In terms of tissue distribution, isoform 1 and isoform 2 are expressed in heart, lung, skeletal muscle and testis; not detected in brain, liver and kidney. Isoform 1 is expressed in spleen.

It is found in the membrane. Functionally, may be involved in the trafficking and exocytosis of secretory vesicles in non-neuronal tissues. This Mus musculus (Mouse) protein is Synaptotagmin-15 (Syt15).